Reading from the N-terminus, the 158-residue chain is Snaclec mucetin subunit alpha (158 aa).

The signal sequence occupies residues 1–23; it reads MGRFTFVSFGLLVVFLSLSGTGA. 3 disulfide bridges follow: Cys-27–Cys-38, Cys-55–Cys-152, and Cys-127–Cys-144. A C-type lectin domain is found at 34–153; it reads YDRYCYQAFS…CGRENPFVCK (120 aa).

The protein belongs to the snaclec family. As to quaternary structure, dimer and tetramer of heterodimers of alpha and beta subunits ((alphabeta)(2) and (alphabeta)(4)); disulfide-linked. These two multimeric forms are found. In terms of processing, the complex is glycosylated. As to expression, expressed by the venom gland.

The protein resides in the secreted. Potent platelet activator that acts via GPIb (GP1BA/GP1BB). After activation by the toxin, the receptor is redistributed on platelet surface thanks to cytoskeletal translocation. The indirect activation of integrin alpha-IIb/beta-3 (ITGA2B/ITGB3) also induced by the toxin is downstream the cytoskeletal translocation of GPIb. This is Snaclec mucetin subunit alpha from Protobothrops mucrosquamatus (Taiwan habu).